Here is a 194-residue protein sequence, read N- to C-terminus: Imidazoleglycerol-phosphate dehydratase (194 aa).

The protein belongs to the imidazoleglycerol-phosphate dehydratase family.

The protein localises to the cytoplasm. The enzyme catalyses D-erythro-1-(imidazol-4-yl)glycerol 3-phosphate = 3-(imidazol-4-yl)-2-oxopropyl phosphate + H2O. It functions in the pathway amino-acid biosynthesis; L-histidine biosynthesis; L-histidine from 5-phospho-alpha-D-ribose 1-diphosphate: step 6/9. The chain is Imidazoleglycerol-phosphate dehydratase from Limosilactobacillus fermentum (strain NBRC 3956 / LMG 18251) (Lactobacillus fermentum).